A 282-amino-acid polypeptide reads, in one-letter code: Bis(5'-nucleosyl)-tetraphosphatase, symmetrical (282 aa).

This sequence belongs to the Ap4A hydrolase family.

It carries out the reaction P(1),P(4)-bis(5'-adenosyl) tetraphosphate + H2O = 2 ADP + 2 H(+). Hydrolyzes diadenosine 5',5'''-P1,P4-tetraphosphate to yield ADP. The polypeptide is Bis(5'-nucleosyl)-tetraphosphatase, symmetrical (Salmonella arizonae (strain ATCC BAA-731 / CDC346-86 / RSK2980)).